The sequence spans 164 residues: C-phycoerythrin class 1 subunit alpha (164 aa).

Residues cysteine 82 and cysteine 139 each coordinate (2R,3E)-phycoerythrobilin.

This sequence belongs to the phycobiliprotein family. In terms of assembly, heterodimer of an alpha and a beta chain. Contains two covalently linked phycoerythrobilin chromophores.

The protein resides in the cellular thylakoid membrane. Functionally, light-harvesting photosynthetic bile pigment-protein from the phycobiliprotein complex. In Synechococcus sp. (strain WH8020), this protein is C-phycoerythrin class 1 subunit alpha (cpeA).